Consider the following 441-residue polypeptide: Homogentisate 1,2-dioxygenase (441 aa).

Histidine 297 (proton acceptor) is an active-site residue. The Fe cation site is built by histidine 340 and glutamate 346. Residues tyrosine 355 and histidine 376 each coordinate homogentisate. Histidine 376 is a Fe cation binding site.

The protein belongs to the homogentisate dioxygenase family. As to quaternary structure, hexamer; dimer of trimers. Fe cation serves as cofactor.

The catalysed reaction is homogentisate + O2 = 4-maleylacetoacetate + H(+). The protein operates within amino-acid degradation; L-phenylalanine degradation; acetoacetate and fumarate from L-phenylalanine: step 4/6. Its function is as follows. Involved in the catabolism of homogentisate (2,5-dihydroxyphenylacetate or 2,5-OH-PhAc), a central intermediate in the degradation of phenylalanine and tyrosine. Catalyzes the oxidative ring cleavage of the aromatic ring of homogentisate to yield maleylacetoacetate. In Streptomyces coelicolor (strain ATCC BAA-471 / A3(2) / M145), this protein is Homogentisate 1,2-dioxygenase.